A 135-amino-acid chain; its full sequence is Small ribosomal subunit protein bS6 (135 aa).

The interval 98–135 (EASPMAKAKDERDARRAAISERSSEADEVEENAEESAE) is disordered. Residues 104 to 122 (KAKDERDARRAAISERSSE) are compositionally biased toward basic and acidic residues. Acidic residues predominate over residues 123–135 (ADEVEENAEESAE).

This sequence belongs to the bacterial ribosomal protein bS6 family.

Binds together with bS18 to 16S ribosomal RNA. The polypeptide is Small ribosomal subunit protein bS6 (Shewanella amazonensis (strain ATCC BAA-1098 / SB2B)).